The following is a 210-amino-acid chain: Putative protein-lysine deacylase ABHD14B (210 aa).

A2 is modified (N-acetylalanine). S91 bears the Phosphoserine mark. Catalysis depends on charge relay system residues S111, D162, and H188.

This sequence belongs to the AB hydrolase superfamily. ABHD14 family. As to quaternary structure, may interact with TAF1. In terms of tissue distribution, ubiquitous. Detected in spleen, thymus, prostate, testis, ovary, small intestine, colon, peripheral blood leukocyte, heart, placenta, lung, liver, skeletal muscle, pancreas and kidney.

The protein localises to the cytoplasm. The protein resides in the nucleus. It catalyses the reaction L-lysyl-[protein] + acetyl-CoA = N(6)-acetyl-L-lysyl-[protein] + CoA + H(+). Its function is as follows. Acts as an atypical protein-lysine deacetylase in vitro. Catalyzes the deacetylation of lysine residues using CoA as substrate, generating acetyl-CoA and the free amine of protein-lysine residues. Additional experiments are however required to confirm the protein-lysine deacetylase activity in vivo. Has hydrolase activity towards various surrogate p-nitrophenyl (pNp) substrates, such as pNp-butyrate, pNp-acetate and pNp-octanoate in vitro, with a strong preference for pNp-acetate. May activate transcription. The sequence is that of Putative protein-lysine deacylase ABHD14B from Homo sapiens (Human).